Here is a 277-residue protein sequence, read N- to C-terminus: Large ribosomal subunit protein uL2 (277 aa).

Residues 222-277 are disordered; it reads GVAMNPVDHPHGGGEGRTSGGRHPVSPWGKPTKGKRTRSNKATDKFIMRSRHQRKK.

The protein belongs to the universal ribosomal protein uL2 family. As to quaternary structure, part of the 50S ribosomal subunit. Forms a bridge to the 30S subunit in the 70S ribosome.

Functionally, one of the primary rRNA binding proteins. Required for association of the 30S and 50S subunits to form the 70S ribosome, for tRNA binding and peptide bond formation. It has been suggested to have peptidyltransferase activity; this is somewhat controversial. Makes several contacts with the 16S rRNA in the 70S ribosome. This chain is Large ribosomal subunit protein uL2, found in Bartonella bacilliformis (strain ATCC 35685 / KC583 / Herrer 020/F12,63).